A 502-amino-acid chain; its full sequence is ATP synthase subunit alpha (502 aa).

Positions 115-134 (IDGQGPINTTKTRPVEQKAT) are disordered. An ATP-binding site is contributed by 169–176 (GDRQTGKT).

It belongs to the ATPase alpha/beta chains family. As to quaternary structure, F-type ATPases have 2 components, CF(1) - the catalytic core - and CF(0) - the membrane proton channel. CF(1) has five subunits: alpha(3), beta(3), gamma(1), delta(1), epsilon(1). CF(0) has three main subunits: a(1), b(2) and c(9-12). The alpha and beta chains form an alternating ring which encloses part of the gamma chain. CF(1) is attached to CF(0) by a central stalk formed by the gamma and epsilon chains, while a peripheral stalk is formed by the delta and b chains.

The protein localises to the cell membrane. The enzyme catalyses ATP + H2O + 4 H(+)(in) = ADP + phosphate + 5 H(+)(out). Its function is as follows. Produces ATP from ADP in the presence of a proton gradient across the membrane. The alpha chain is a regulatory subunit. In Staphylococcus haemolyticus (strain JCSC1435), this protein is ATP synthase subunit alpha.